Consider the following 921-residue polypeptide: Isoleucine--tRNA ligase (921 aa).

A 'HIGH' region motif is present at residues 57-67; the sequence is PYANGELHMGH. Glu552 contacts L-isoleucyl-5'-AMP. A 'KMSKS' region motif is present at residues 593–597; that stretch reads KMSKS. Lys596 lines the ATP pocket. Zn(2+) contacts are provided by Cys888, Cys891, Cys908, and Cys911.

Belongs to the class-I aminoacyl-tRNA synthetase family. IleS type 1 subfamily. In terms of assembly, monomer. Zn(2+) serves as cofactor.

It localises to the cytoplasm. It catalyses the reaction tRNA(Ile) + L-isoleucine + ATP = L-isoleucyl-tRNA(Ile) + AMP + diphosphate. Its function is as follows. Catalyzes the attachment of isoleucine to tRNA(Ile). As IleRS can inadvertently accommodate and process structurally similar amino acids such as valine, to avoid such errors it has two additional distinct tRNA(Ile)-dependent editing activities. One activity is designated as 'pretransfer' editing and involves the hydrolysis of activated Val-AMP. The other activity is designated 'posttransfer' editing and involves deacylation of mischarged Val-tRNA(Ile). The chain is Isoleucine--tRNA ligase from Listeria monocytogenes serotype 4b (strain F2365).